A 216-amino-acid chain; its full sequence is Pyrophosphatase PpaX (216 aa).

The active-site Nucleophile is Asp-9.

The protein belongs to the HAD-like hydrolase superfamily. PpaX family. The cofactor is Mg(2+).

It carries out the reaction diphosphate + H2O = 2 phosphate + H(+). Hydrolyzes pyrophosphate formed during P-Ser-HPr dephosphorylation by HPrK/P. Might play a role in controlling the intracellular pyrophosphate pool. The chain is Pyrophosphatase PpaX from Bacillus cereus (strain ATCC 10987 / NRS 248).